We begin with the raw amino-acid sequence, 1068 residues long: TSC22 domain family protein 1 (1068 aa).

The interval 1-98 is required for interaction with TGFBR1 and promotion of TGF-beta signaling; the sequence is MHQPPESTAA…SQAQLQAQPL (98 aa). 3 disordered regions span residues 23 to 110, 125 to 288, and 602 to 623; these read AHPA…KKSG, ISSN…SPAS, and YSQA…QQLQ. The span at 36–55 shows a compositional bias: low complexity; the sequence is GSASALNAAGTGVGSSATSS. Residues 58-70 are compositionally biased toward pro residues; sequence FPPPSLLQPPPPA. Residues 84 to 100 show a composition bias toward low complexity; that stretch reads SLNLLSQAQLQAQPLAP. Positions 133–142 are enriched in acidic residues; that stretch reads EDTESYDDLD. Basic residues predominate over residues 216-240; sequence HPHHLHHHHHIHHGHHLQHGHHHPS. Residues 241–250 are compositionally biased toward low complexity; it reads HVAVASASIP. Polar residues predominate over residues 261–271; it reads KLSTTGSSDSI. Serine 263 is modified (phosphoserine). The segment covering 272–288 has biased composition (low complexity); sequence TPVAPTSAVSSSGSPAS. Over residues 609–620 the composition is skewed to pro residues; sequence VQTPLPGAPPPQ. The tract at residues 1000–1021 is leucine-zipper; that stretch reads VLKEQIKELIEKNSQLEQENNL. The segment at 1032-1068 is disordered; it reads AQFQAQLQTGSPPATTQPQGTTQPPAQPASQGSGPTA. A compositionally biased stretch (low complexity) spans 1039–1068; it reads QTGSPPATTQPQGTTQPPAQPASQGSGPTA.

This sequence belongs to the TSC-22/Dip/Bun family. In terms of assembly, forms homodimers. Forms heterodimers. Component of a complex composed of TSC22D1 (via N-terminus), TGFBR1 and TGFBR2; the interaction between TSC22D1 and TGFBR1 is inhibited by SMAD7 and promoted by TGFB1. Interacts with SMAD7; the interaction requires TGF-beta and the interaction is inhibited by TGFBR1. Interacts with TPT1/fortilin; interaction results in the destabilization of TSC22D1 protein and prevents TSC22D1-mediated apoptosis. Interacts with SMAD4 (via N-terminus). Interacts with ACVRL1/ALK1, ACVR1/ALK2, BMPR1A/ALK3, ACVR1B/ALK4, BMPR1B/ALK6, ACVR2A/ACTRII, and BMPR2. Interacts with SMAD6. Interacts with TFE3; the interaction is enhanced in the presence of TGF-beta. As to quaternary structure, forms a heterodimer with TSC22D4/THG1. Forms a heterodimer with TSC22D4/THG1. Interacts with histone H1-2. Interacts with GNL3.

It is found in the cytoplasm. Its subcellular location is the nucleus. It localises to the cell membrane. The protein resides in the mitochondrion. Transcriptional repressor. Acts on the C-type natriuretic peptide (CNP) promoter. Acts to promote CASP3-mediated apoptosis. Positively regulates TGF-beta signaling by interacting with SMAD7 which inhibits binding of SMAD7 to TGFBR1, preventing recruitment of SMURF ubiquitin ligases to TGFBR1 and inhibiting SMURF-mediated ubiquitination and degradation of TGFBR1. Contributes to enhancement of TGF-beta signaling by binding to and modulating the transcription activator activity of SMAD4. Promotes TGF-beta-induced transcription of COL1A2; via its interaction with TFE3 at E-boxes in the gene proximal promoter. Plays a role in the repression of hematopoietic precursor cell growth. Promotes IL2 deprivation-induced apoptosis in T-lymphocytes, via repression of TSC22D3/GILZ transcription and activation of the caspase cascade. Its function is as follows. May act to negatively regulate TGFB3 signaling and thereby inhibit cell death in mammary gland cells. In terms of biological role, positively regulates cell death in response to TGFB3 during mammary gland involution. This Macaca fascicularis (Crab-eating macaque) protein is TSC22 domain family protein 1.